The chain runs to 429 residues: tRNA threonylcarbamoyladenosine dehydratase 1 (429 aa).

The next 2 helical transmembrane spans lie at 3–23 and 74–94; these read NNTWKLIATTALISVFSTQLA and EQYIVIVGAGEVGSWVCTMLI. Phosphoserine is present on S259. Residues 279-299 traverse the membrane as a helical segment; the sequence is LPELGTMPGIFGLSIATWILT.

Belongs to the HesA/MoeB/ThiF family.

It is found in the mitochondrion outer membrane. Catalyzes the ATP-dependent dehydration of threonylcarbamoyladenosine at position 37 (t(6)A37) to form cyclic t(6)A37 (ct(6)A37) in tRNAs that read codons beginning with adenine. This chain is tRNA threonylcarbamoyladenosine dehydratase 1 (TCD1), found in Saccharomyces cerevisiae (strain ATCC 204508 / S288c) (Baker's yeast).